The primary structure comprises 359 residues: Heme A synthase (359 aa).

Helical transmembrane passes span 8–28, 94–114, 124–144, 159–179, and 215–235; these read IMSI…VVGG, LLGR…CYLK, LLLI…MVKS, GHLL…LIII, and IIIF…GLDA. Residue His274 coordinates heme. 3 helical membrane passes run 276–296, 303–323, and 328–348; these read WFGI…IILN, MGMV…ITLL, and ILAA…FLFI. Position 334 (His334) interacts with heme.

Belongs to the COX15/CtaA family. Type 2 subfamily. In terms of assembly, interacts with CtaB. Heme b is required as a cofactor.

The protein resides in the cell membrane. The enzyme catalyses Fe(II)-heme o + 2 A + H2O = Fe(II)-heme a + 2 AH2. It functions in the pathway porphyrin-containing compound metabolism; heme A biosynthesis; heme A from heme O: step 1/1. In terms of biological role, catalyzes the conversion of heme O to heme A by two successive hydroxylations of the methyl group at C8. The first hydroxylation forms heme I, the second hydroxylation results in an unstable dihydroxymethyl group, which spontaneously dehydrates, resulting in the formyl group of heme A. This Orientia tsutsugamushi (strain Boryong) (Rickettsia tsutsugamushi) protein is Heme A synthase.